Here is a 258-residue protein sequence, read N- to C-terminus: Synapse differentiation-inducing gene protein 1 (258 aa).

Residues 1–181 (MDGIIEQKSV…NFLMMPPRDH (181 aa)) lie on the Cytoplasmic side of the membrane. At Ser137 the chain carries Phosphoserine. A helical transmembrane segment spans residues 182–202 (LGLSVFSMLCCFWPLGIAAFY). The Extracellular segment spans residues 203-228 (LSHETNKAVAKGDFHQASTSSRRALF). The helical intramembrane region spans 229 to 249 (LAVLSITIGTGIYVGVAVALI). Topologically, residues 250–258 (AYLSKNNHL) are extracellular.

Belongs to the CD225/Dispanin family. Homodimer. Interacts with GRIA1 and GRIA2. Brain-specific. Expressed in Purkinje neurons in cerebellum. Also detected in the hippocampus. Found at excitatory synapses and postsynaptic cells.

It localises to the cell membrane. The protein localises to the early endosome membrane. It is found in the postsynaptic density membrane. The protein resides in the synapse. Its subcellular location is the cell projection. It localises to the dendrite. The protein localises to the dendritic spine. Functionally, may regulate AMPA receptor content at nascent synapses, and have a role in postsynaptic development and maturation. The chain is Synapse differentiation-inducing gene protein 1 (Syndig1) from Mus musculus (Mouse).